We begin with the raw amino-acid sequence, 587 residues long: 2-succinyl-5-enolpyruvyl-6-hydroxy-3-cyclohexene-1-carboxylate synthase (587 aa).

Belongs to the TPP enzyme family. MenD subfamily. As to quaternary structure, homodimer. Requires Mg(2+) as cofactor. Mn(2+) is required as a cofactor. Thiamine diphosphate serves as cofactor.

The enzyme catalyses isochorismate + 2-oxoglutarate + H(+) = 5-enolpyruvoyl-6-hydroxy-2-succinyl-cyclohex-3-ene-1-carboxylate + CO2. Its pathway is quinol/quinone metabolism; 1,4-dihydroxy-2-naphthoate biosynthesis; 1,4-dihydroxy-2-naphthoate from chorismate: step 2/7. It participates in cofactor biosynthesis; phylloquinone biosynthesis. Functionally, catalyzes the thiamine diphosphate-dependent decarboxylation of 2-oxoglutarate and the subsequent addition of the resulting succinic semialdehyde-thiamine pyrophosphate anion to isochorismate to yield 2-succinyl-5-enolpyruvyl-6-hydroxy-3-cyclohexene-1-carboxylate (SEPHCHC). The protein is 2-succinyl-5-enolpyruvyl-6-hydroxy-3-cyclohexene-1-carboxylate synthase of Prochlorococcus marinus (strain MIT 9312).